The chain runs to 2273 residues: Nonribosomal peptide synthetase hasD (2273 aa).

Residues 100 to 446 (FHDQLQKHSS…AGLGLALGYF (347 aa)) form an adenylation 1 region. Residues 588–664 (ERGLGAVESV…NIAAAVVELS (77 aa)) form the Carrier 1 domain. Residue serine 625 is modified to O-(pantetheine 4'-phosphoryl)serine. Positions 696–1120 (IAPMTDMQTR…AAQPDTDLSN (425 aa)) are condensation 1. The tract at residues 1156 to 1487 (ENSIQAHPDI…SGVQVTPGYL (332 aa)) is adenylation 2. The 81-residue stretch at 1634 to 1714 (DLETDTQRVL…DLSLAIDELV (81 aa)) folds into the Carrier 2 domain. Position 1673 is an O-(pantetheine 4'-phosphoryl)serine (serine 1673). Residues 1735 to 2127 (GQLPLSYLEK…QDLEVDMEYD (393 aa)) are condensation 2. Residues 2174–2200 (PVGLTPSHEGSAELTNGTNKTDSTTGQ) form a disordered region. The span at 2186–2200 (ELTNGTNKTDSTTGQ) shows a compositional bias: polar residues. One can recognise a Carrier 3 domain in the interval 2201 to 2273 (QELENNLTDV…LELATCAVII (73 aa)). O-(pantetheine 4'-phosphoryl)serine is present on serine 2235.

This sequence belongs to the NRP synthetase family. It depends on pantetheine 4'-phosphate as a cofactor.

It participates in secondary metabolite biosynthesis. Nonribosomal peptide synthetase; part of the gene cluster that mediates the biosynthesis of hexadehydro-astechrome (HAS), a tryptophan-derived iron(III)-complex that acts as a virulence factor in infected mice. Within the pathway, the NRPS condenses tryptophan and alanine to produce the Trp-Ala dipeptide. The 7-dimethylallyltryptophan synthase hasE then catalyzes the prenylation of the hasD-tethered tryptophan or the resulting tethered Trp-Ala dipeptide at the C-7 position of the indole moiety. HAS biosynthesis continues via tethered intermediates with the succesive actions of the cytochrome P450 monooxygenase hasH, the O-methyltransferase hasC, and the FAD-linked oxidoreductase hasG. The resulting O-methylated diketopiperazine is then released from hasD. Finally, three O-methylated diketopiperazine molecules assemble in a trimeric complex with Fe(III) to produce hexadehydro-astechrome. The protein is Nonribosomal peptide synthetase hasD of Aspergillus fumigatus (strain CBS 144.89 / FGSC A1163 / CEA10) (Neosartorya fumigata).